Here is a 299-residue protein sequence, read N- to C-terminus: Nucleotide-binding protein AFE_3021 (299 aa).

11–18 contributes to the ATP binding site; sequence GLSGSGKS. 62–65 is a GTP binding site; it reads DVRN.

It belongs to the RapZ-like family.

Functionally, displays ATPase and GTPase activities. This chain is Nucleotide-binding protein AFE_3021, found in Acidithiobacillus ferrooxidans (strain ATCC 23270 / DSM 14882 / CIP 104768 / NCIMB 8455) (Ferrobacillus ferrooxidans (strain ATCC 23270)).